The following is a 218-amino-acid chain: Cytochrome c biogenesis ATP-binding export protein CcmA (218 aa).

One can recognise an ABC transporter domain in the interval Leu-2–Val-217. An ATP-binding site is contributed by Gly-34–Thr-41.

This sequence belongs to the ABC transporter superfamily. CcmA exporter (TC 3.A.1.107) family. The complex is composed of two ATP-binding proteins (CcmA) and two transmembrane proteins (CcmB).

The protein resides in the cell inner membrane. It carries out the reaction heme b(in) + ATP + H2O = heme b(out) + ADP + phosphate + H(+). Its function is as follows. Part of the ABC transporter complex CcmAB involved in the biogenesis of c-type cytochromes; once thought to export heme, this seems not to be the case, but its exact role is uncertain. Responsible for energy coupling to the transport system. The chain is Cytochrome c biogenesis ATP-binding export protein CcmA from Yersinia pestis.